A 214-amino-acid polypeptide reads, in one-letter code: Pyridoxine/pyridoxamine 5'-phosphate oxidase (214 aa).

Residues 9–12 (RREY) and Lys-67 contribute to the substrate site. Residues 62–67 (RTVLLK), 77–78 (YS), Arg-83, Lys-84, and Gln-106 each bind FMN. Positions 124, 128, and 132 each coordinate substrate. FMN contacts are provided by residues 141–142 (QS) and Trp-186. 192-194 (RLH) is a substrate binding site. Arg-196 is a binding site for FMN.

This sequence belongs to the pyridoxamine 5'-phosphate oxidase family. In terms of assembly, homodimer. FMN is required as a cofactor.

It catalyses the reaction pyridoxamine 5'-phosphate + O2 + H2O = pyridoxal 5'-phosphate + H2O2 + NH4(+). It carries out the reaction pyridoxine 5'-phosphate + O2 = pyridoxal 5'-phosphate + H2O2. Its pathway is cofactor metabolism; pyridoxal 5'-phosphate salvage; pyridoxal 5'-phosphate from pyridoxamine 5'-phosphate: step 1/1. It participates in cofactor metabolism; pyridoxal 5'-phosphate salvage; pyridoxal 5'-phosphate from pyridoxine 5'-phosphate: step 1/1. Its function is as follows. Catalyzes the oxidation of either pyridoxine 5'-phosphate (PNP) or pyridoxamine 5'-phosphate (PMP) into pyridoxal 5'-phosphate (PLP). This chain is Pyridoxine/pyridoxamine 5'-phosphate oxidase, found in Porphyromonas gingivalis (strain ATCC 33277 / DSM 20709 / CIP 103683 / JCM 12257 / NCTC 11834 / 2561).